Here is a 609-residue protein sequence, read N- to C-terminus: Copper resistance protein A (609 aa).

The segment at residues 1–32 is a signal peptide (tat-type signal); that stretch reads MESRTSRRTFVKGLAAAGVLGGLGLWRSPSWA. Residues histidine 100, histidine 102, histidine 142, and histidine 144 each contribute to the Cu cation site. 5 repeat units span residues 367–374, 375–382, 408–415, 419–426, and 427–434. A 5 X 8 AA tandem repeats of D-H-X-X-M-X-G-M region spans residues 367-434; the sequence is DDMGMGGMDH…GMDHGAMGGM (68 aa). Cu cation is bound by residues histidine 542, histidine 545, histidine 547, histidine 590, cysteine 591, histidine 592, histidine 596, and methionine 601.

This sequence belongs to the multicopper oxidase family. CopA subfamily. Predicted to be exported by the Tat system. The position of the signal peptide cleavage has been experimentally proven.

It is found in the periplasm. Its function is as follows. Mediates copper resistance by sequestration of copper in the periplasm along with the copper-binding protein CopC. May have oxidase activity. The chain is Copper resistance protein A (copA) from Pseudomonas syringae pv. tomato.